Consider the following 313-residue polypeptide: Dimethyladenosine transferase (313 aa).

The tract at residues 1 to 21 (MPKVKSGAIGRRRGRQEQRRE) is disordered. Histidine 37, leucine 39, glycine 64, glutamate 85, aspartate 113, and asparagine 128 together coordinate S-adenosyl-L-methionine.

Belongs to the class I-like SAM-binding methyltransferase superfamily. rRNA adenine N(6)-methyltransferase family. As to quaternary structure, part of the small subunit (SSU) processome, composed of more than 70 proteins and the RNA chaperone small nucleolar RNA (snoRNA) U3.

The protein resides in the nucleus. It localises to the nucleoplasm. Its subcellular location is the nucleolus. The enzyme catalyses adenosine(1779)/adenosine(1780) in 18S rRNA + 4 S-adenosyl-L-methionine = N(6)-dimethyladenosine(1779)/N(6)-dimethyladenosine(1780) in 18S rRNA + 4 S-adenosyl-L-homocysteine + 4 H(+). In terms of biological role, specifically dimethylates two adjacent adenosines in the loop of a conserved hairpin near the 3'-end of 18S rRNA in the 40S particle. Involved in the pre-rRNA processing steps leading to small-subunit rRNA production independently of its RNA-modifying catalytic activity. Part of the small subunit (SSU) processome, first precursor of the small eukaryotic ribosomal subunit. During the assembly of the SSU processome in the nucleolus, many ribosome biogenesis factors, an RNA chaperone and ribosomal proteins associate with the nascent pre-rRNA and work in concert to generate RNA folding, modifications, rearrangements and cleavage as well as targeted degradation of pre-ribosomal RNA by the RNA exosome. The polypeptide is Dimethyladenosine transferase (DIMT1) (Macaca fascicularis (Crab-eating macaque)).